A 1105-amino-acid polypeptide reads, in one-letter code: KAT8 regulatory NSL complex subunit 1 (1105 aa).

Lysine 104 is modified (N6-acetyllysine). Disordered stretches follow at residues 145-211 (GQTA…CTLP) and 225-263 (NNST…GVKL). The span at 225-258 (NNSTANKSSVNSMEQPALQGSSRLSPGTDSSSNL) shows a compositional bias: polar residues. Serine 249 is subject to Phosphoserine. Lysine 262 is covalently cross-linked (Glycyl lysine isopeptide (Lys-Gly) (interchain with G-Cter in SUMO2)). Serine 268 carries the post-translational modification Phosphoserine. A coiled-coil region spans residues 283 to 314 (RITALLRRQADIESRARRLQKRLQVVQAKQVE). Lysine 331 is covalently cross-linked (Glycyl lysine isopeptide (Lys-Gly) (interchain with G-Cter in SUMO2)). 2 disordered regions span residues 399–426 (DSDV…PEQR) and 733–857 (TAKL…RRGE). Composition is skewed to basic and acidic residues over residues 741–753 (TRPD…HLDD) and 780–804 (DPNH…HHTD). Positions 827 to 850 (STSSDSPAPASSSSQVTASTSQQP) are enriched in low complexity. The interval 850 to 882 (PVRRRRGESSFDINNIVIPMSVAATTRVEKLQY) is required for activation of KAT8 histone acetyltransferase activity. The PEHE domain occupies 884–1035 (EILTPSWREV…GLDEQSVQPW (152 aa)). Positions 910–928 (EDLSDAAFAALHAKCEEME) are interaction with KAT8 HAT domain. Positions 938–1034 (VPPQRRGSRS…LGLDEQSVQP (97 aa)) are disordered. Residues 955 to 965 (TTPQLGSANPS) show a composition bias toward polar residues. Over residues 975–988 (SSSHSLSEYSHGQS) the composition is skewed to low complexity. 2 positions are modified to phosphoserine: serine 991 and serine 994. A Phosphothreonine modification is found at threonine 1003. The segment covering 1008–1019 (DTPRHLASEDTR) has biased composition (basic and acidic residues). Residue serine 1045 is modified to Phosphoserine. Residues 1058–1105 (ERAARCTRRTSGSKTGRETEAAPTSPPIVPLKSRHLVAAATAQRPTHR) form a disordered region.

As to quaternary structure, component of the NSL complex at least composed of MOF/KAT8, KANSL1, KANSL2, KANSL3, MCRS1, PHF20, OGT1/OGT, WDR5 and HCFC1. Interacts (via PEHE domain) with KAT8 (via HAT domain); the interaction is direct. Component of some MLL1/MLL complex, at least composed of the core components KMT2A/MLL1, ASH2L, HCFC1, WDR5 and RBBP5, as well as the facultative components BACC1, CHD8, E2F6, HSP70, INO80C, KANSL1, LAS1L, MAX, MCRS1, MGA, KAT8/MOF, PELP1, PHF20, PRP31, RING2, RUVB1/TIP49A, RUVB2/TIP49B, SENP3, TAF1, TAF4, TAF6, TAF7, TAF9 and TEX10. In terms of tissue distribution, expressed in the brain.

The protein resides in the nucleus. Its subcellular location is the chromosome. It localises to the centromere. The protein localises to the kinetochore. It is found in the mitochondrion. The protein resides in the cytoplasm. Its subcellular location is the cytoskeleton. It localises to the spindle pole. Non-catalytic component of the NSL histone acetyltransferase complex, a multiprotein complex that mediates histone H4 acetylation at 'Lys-5'- and 'Lys-8' (H4K5ac and H4K8ac) at transcription start sites and promotes transcription initiation. The NSL complex also acts as a regulator of gene expression in mitochondria. In addition to its role in transcription, KANSL1 also plays an essential role in spindle assembly during mitosis. Associates with microtubule ends and contributes to microtubule stability. This is KAT8 regulatory NSL complex subunit 1 (KANSL1) from Homo sapiens (Human).